Consider the following 251-residue polypeptide: Hydroxyacylglutathione hydrolase (251 aa).

Zn(2+) contacts are provided by His59, His61, Asp63, His64, His118, Asp141, and His179.

The protein belongs to the metallo-beta-lactamase superfamily. Glyoxalase II family. Monomer. The cofactor is Zn(2+).

It catalyses the reaction an S-(2-hydroxyacyl)glutathione + H2O = a 2-hydroxy carboxylate + glutathione + H(+). Its pathway is secondary metabolite metabolism; methylglyoxal degradation; (R)-lactate from methylglyoxal: step 2/2. Thiolesterase that catalyzes the hydrolysis of S-D-lactoyl-glutathione to form glutathione and D-lactic acid. The sequence is that of Hydroxyacylglutathione hydrolase from Prochlorococcus marinus (strain NATL1A).